Reading from the N-terminus, the 286-residue chain is Probable endonuclease 4 (286 aa).

Histidine 67, histidine 107, glutamate 146, aspartate 180, histidine 183, histidine 217, aspartate 230, histidine 232, and glutamate 262 together coordinate Zn(2+).

This sequence belongs to the AP endonuclease 2 family. The cofactor is Zn(2+).

The catalysed reaction is Endonucleolytic cleavage to 5'-phosphooligonucleotide end-products.. Its function is as follows. Endonuclease IV plays a role in DNA repair. It cleaves phosphodiester bonds at apurinic or apyrimidinic (AP) sites, generating a 3'-hydroxyl group and a 5'-terminal sugar phosphate. This is Probable endonuclease 4 from Methanosphaerula palustris (strain ATCC BAA-1556 / DSM 19958 / E1-9c).